The sequence spans 197 residues: Pre-mRNA-splicing factor SNT309 (197 aa).

Associated with the spliceosome.

It is found in the nucleus. In terms of biological role, involved in pre-mRNA splicing. This Eremothecium gossypii (strain ATCC 10895 / CBS 109.51 / FGSC 9923 / NRRL Y-1056) (Yeast) protein is Pre-mRNA-splicing factor SNT309 (SNT309).